We begin with the raw amino-acid sequence, 66 residues long: MKNKVKELRARFGYSQEKLGETVGVTRQTVAAIEKGDYVPSLLLALKICKAFSMKMEDVFWLEEEN.

Positions 5 to 59 (VKELRARFGYSQEKLGETVGVTRQTVAAIEKGDYVPSLLLALKICKAFSMKMEDV) constitute an HTH cro/C1-type domain. The segment at residues 16 to 35 (QEKLGETVGVTRQTVAAIEK) is a DNA-binding region (H-T-H motif).

This is an uncharacterized protein from Bacillus subtilis (strain 168).